A 415-amino-acid chain; its full sequence is MYSNLQKTDKAVFDAVEKELGRQRTKLELIASENFTSLSVMEAQGSILTNKYAEGYPGKRYYGGCEFVDMVETLAIERAKQIFGAEHANVQPHSGAQANMAAYLALINPGDTVLGLNLSHGGHLTHGHPMNFSGKYFKIVPMNVRKEDEQIDYEEAAKLALEHKPKVIMAGASNYSRIFDWKKLREIADSVDAYLICDVAHYAGLIAAGVYSNPVPYADIVTTTTHKTLRGPRGGLILCKEKHAKAVNSSVFPGQQGGPLMHVIAAKAVCFGEALKPEFKEYQTQVVKNAKELSTQLQKLGYRIVSGGTDCHVLCVDLTSKSMTGKAAEEALDKAGITTNKNTIPYDTQKPFITSGVRLGTPAVTTRGMKEAEMAAIASFIDNVLNNADNEAKLAEISKEVTAFLGKFLLYTELN.

(6S)-5,6,7,8-tetrahydrofolate is bound by residues L118 and 122–124; that span reads GHL. K227 bears the N6-(pyridoxal phosphate)lysine mark.

The protein belongs to the SHMT family. In terms of assembly, homodimer. The cofactor is pyridoxal 5'-phosphate.

It localises to the cytoplasm. It catalyses the reaction (6R)-5,10-methylene-5,6,7,8-tetrahydrofolate + glycine + H2O = (6S)-5,6,7,8-tetrahydrofolate + L-serine. Its pathway is one-carbon metabolism; tetrahydrofolate interconversion. The protein operates within amino-acid biosynthesis; glycine biosynthesis; glycine from L-serine: step 1/1. Catalyzes the reversible interconversion of serine and glycine with tetrahydrofolate (THF) serving as the one-carbon carrier. This reaction serves as the major source of one-carbon groups required for the biosynthesis of purines, thymidylate, methionine, and other important biomolecules. Also exhibits THF-independent aldolase activity toward beta-hydroxyamino acids, producing glycine and aldehydes, via a retro-aldol mechanism. This is Serine hydroxymethyltransferase from Elusimicrobium minutum (strain Pei191).